A 506-amino-acid chain; its full sequence is Maturase K (506 aa).

Belongs to the intron maturase 2 family. MatK subfamily.

It is found in the plastid. It localises to the chloroplast. Functionally, usually encoded in the trnK tRNA gene intron. Probably assists in splicing its own and other chloroplast group II introns. The sequence is that of Maturase K from Angiopteris evecta (Mule's foot fern).